The sequence spans 475 residues: Probable UDP-N-acetylglucosamine pyrophosphorylase (475 aa).

Positions 103–106 (LAGG) match the Substrate binding motif. Residues 103-106 (LAGG), K117, Q194, and G220 contribute to the UTP site. N221 is a substrate binding site. Residue D251 participates in UTP binding. The short motif at 301–302 (EY) is the Substrate binding element. UTP is bound at residue K378. S405 carries the phosphoserine modification. K410 is a binding site for substrate.

It belongs to the UDPGP type 1 family.

It localises to the cytoplasm. Its subcellular location is the nucleus. The enzyme catalyses N-acetyl-alpha-D-glucosamine 1-phosphate + UTP + H(+) = UDP-N-acetyl-alpha-D-glucosamine + diphosphate. It participates in nucleotide-sugar biosynthesis; UDP-N-acetyl-alpha-D-glucosamine biosynthesis; UDP-N-acetyl-alpha-D-glucosamine from N-acetyl-alpha-D-glucosamine 1-phosphate: step 1/1. This Schizosaccharomyces pombe (strain 972 / ATCC 24843) (Fission yeast) protein is Probable UDP-N-acetylglucosamine pyrophosphorylase (uap1).